Consider the following 165-residue polypeptide: Anaphase-promoting complex subunit 11 (165 aa).

The segment at 52–95 adopts an RING-type; atypical zinc-finger fold; that stretch reads CPSCKFPGDQCPLVIGLCHHNFHDHCIYRWLDTPTSKGLCPMCR.

As to quaternary structure, the APC/C is composed of at least 13 subunits that stay tightly associated throughout the cell cycle: APC1, APC2, APC4, APC5, APC9, APC11, CDC16, CDC23, CDC26, CDC27, DOC1, MND2 and SWM1.

It participates in protein modification; protein ubiquitination. Its function is as follows. Probably catalytic subunit of the anaphase promoting complex/cyclosome (APC/C), a cell cycle-regulated E3 ubiquitin-protein ligase complex that controls progression through mitosis and the G1 phase of the cell cycle. The APC/C is thought to confer substrate specificity and, in the presence of ubiquitin-conjugating E2 enzymes, it catalyzes the formation of protein-ubiquitin conjugates that are subsequently degraded by the 26S proteasome. In early mitosis, the APC/C is activated by CDC20 and targets securin PDS1, the B-type cyclin CLB5, and other anaphase inhibitory proteins for proteolysis, thereby triggering the separation of sister chromatids at the metaphase-to-anaphase transition. In late mitosis and in G1, degradation of CLB5 allows activation of the APC/C by CDH1, which is needed to destroy CDC20 and the B-type cyclin CLB2 to allow exit from mitosis and creating the low CDK state necessary for cytokinesis and for reforming prereplicative complexes in G1 prior to another round of replication. APC11 is required to recruit the ubiquitin-conjugating enzyme E2 to the APC/C. The polypeptide is Anaphase-promoting complex subunit 11 (APC11) (Saccharomyces cerevisiae (strain ATCC 204508 / S288c) (Baker's yeast)).